A 330-amino-acid chain; its full sequence is Transcription factor TGA2 (330 aa).

Residues 1-48 (MADTSPRTDVSTDDDTDHPDLGSEGALVNTAASDSSDRSKGKMDQKTL) are disordered. Residues 35-47 (SSDRSKGKMDQKT) are compositionally biased toward basic and acidic residues. Residues 44–107 (DQKTLRRLAQ…GTGDQAHSTG (64 aa)) enclose the bZIP domain. Coiled-coil stretches lie at residues 45 to 142 (QKTL…HAGD) and 217 to 244 (INNLQQTSQQAEDALSQGMESLQQSLAD). Positions 46-66 (KTLRRLAQNREAARKSRLRKK) are basic motif. The interval 72-86 (LENSRLKLTQLEQEL) is leucine-zipper. In terms of domain architecture, DOG1 spans 111 to 327 (ALAFDAEHSR…RALSSLWLAR (217 aa)).

It belongs to the bZIP family. As to quaternary structure, binds DNA as a dimer. Interacts with NPR1, NPR3 and NPR4. Interacts with GRXC7/ROXY1 and GRXC9/GRX480. As to expression, expressed in the whole plant.

Its subcellular location is the nucleus. Transcriptional activator that binds specifically to the DNA sequence 5'-TGACG-3'. Recognizes ocs elements like the as-1 motif of the cauliflower mosaic virus 35S promoter. Binding to the as-1-like cis elements mediate auxin- and salicylic acid-inducible transcription. Required to induce the systemic acquired resistance (SAR) via the regulation of pathogenesis-related genes expression. Binding to the as-1 element of PR-1 promoter is salicylic acid-inducible and mediated by NPR1. Could also bind to the C-boxes (5'-ATGACGTCAT-3') with high affinity. The chain is Transcription factor TGA2 (TGA2) from Arabidopsis thaliana (Mouse-ear cress).